The chain runs to 296 residues: Cytidine deaminase (296 aa).

2 consecutive CMP/dCMP-type deaminase domains span residues 47–167 (DSHE…FGPA) and 186–296 (ESDD…VDPV). 88-90 (NLE) provides a ligand contact to substrate. Histidine 101 provides a ligand contact to Zn(2+). Glutamate 103 acts as the Proton donor in catalysis. Zn(2+)-binding residues include cysteine 128 and cysteine 131.

This sequence belongs to the cytidine and deoxycytidylate deaminase family. In terms of assembly, homodimer. It depends on Zn(2+) as a cofactor.

It carries out the reaction cytidine + H2O + H(+) = uridine + NH4(+). The enzyme catalyses 2'-deoxycytidine + H2O + H(+) = 2'-deoxyuridine + NH4(+). Functionally, this enzyme scavenges exogenous and endogenous cytidine and 2'-deoxycytidine for UMP synthesis. The polypeptide is Cytidine deaminase (Shewanella amazonensis (strain ATCC BAA-1098 / SB2B)).